The chain runs to 653 residues: Brain-enriched guanylate kinase-associated protein (653 aa).

Tyr186 is modified (phosphotyrosine). Positions Pro241–Tyr271 are disordered. Residues Ser243–Ser252 are compositionally biased toward polar residues. Phosphoserine occurs at positions 249, 278, 295, and 314. The tract at residues Arg288–Gly329 is disordered. The span at Thr315–Glu327 shows a compositional bias: acidic residues. Ser400 and Ser427 each carry phosphoserine. Position 435 is an asymmetric dimethylarginine (Arg435). Ser523, Ser533, Ser535, Ser558, Ser560, Ser564, Ser613, and Ser623 each carry phosphoserine. Residues Gly587 to Asn653 are disordered.

Interacts with DLG4 and DLGAP1 and forms a ternary complex.

The protein localises to the cytoplasm. It localises to the membrane. In terms of biological role, may sustain the structure of the postsynaptic density (PSD). This is Brain-enriched guanylate kinase-associated protein (BEGAIN) from Ovis aries (Sheep).